Reading from the N-terminus, the 122-residue chain is MIEIKLKNPEDFLKVKETLTRMGIANNKDKVLYQSCHILQKQGKYYIVHFKEMLRMDGRQVDIDGEDYQRRDSIAQLLEDWGLIVIEDSAREDLFGLTNNFRVISFKQKDDWTLKAKYTIGN.

Positions 15 to 37 (VKETLTRMGIANNKDKVLYQSCH) form a DNA-binding region, H-T-H motif.

Functionally, controls the translation of a number of proteins (such as regA itself, rIIB and at least 35 others) by binding to their mRNA. The protein is Translation repressor protein (regA) of Escherichia phage RB69 (Bacteriophage RB69).